Reading from the N-terminus, the 218-residue chain is MTQDEMKKAAGWAALEYVEVGSIVGVGTGSTVNHFIDALATMKDDIKGAVSSSVASTEKLKELGIEVFDCNDVAGLDVYVDGADEINGLNEMIKGGGAALTREKIVAAISDKFICIVDNTKQVDILGEFPLPVEVIPMARSYVARELVKLGGDPAYREGVVTDNGNMILDVHNMKITNAKELEDKINALPGVVTVGLFAHRGADVLLVGAPDGVKKFV.

Residues 28 to 31 (TGST), 81 to 84 (DGAD), and 94 to 97 (KGGG) contribute to the substrate site. Residue Glu-103 is the Proton acceptor of the active site. Substrate is bound at residue Lys-121.

This sequence belongs to the ribose 5-phosphate isomerase family. As to quaternary structure, homodimer.

It carries out the reaction aldehydo-D-ribose 5-phosphate = D-ribulose 5-phosphate. The protein operates within carbohydrate degradation; pentose phosphate pathway; D-ribose 5-phosphate from D-ribulose 5-phosphate (non-oxidative stage): step 1/1. Its function is as follows. Catalyzes the reversible conversion of ribose-5-phosphate to ribulose 5-phosphate. The sequence is that of Ribose-5-phosphate isomerase A from Aliivibrio salmonicida (strain LFI1238) (Vibrio salmonicida (strain LFI1238)).